We begin with the raw amino-acid sequence, 439 residues long: MKRVADVLIVGSGVAGLYASLNLREDLEIIMVSKKSVNLCNSSLAQGGIAVARGKEDFQSFIEDTLKAGKYENNIDSVRVLVEESMDNINKLIDLGANFEKDENGVLFTKEGAHEINRIVYHKDITGKHVEDILLENVKRRKNIKIIEDCEMVDIYHRGNRCIGALFNKDGQDLSIYAKVVILATGGIGGLFKKSTNERIITGDSIGVAIRNNIEIKDLSYIQIHPTAFFSKKSEEKRFLISESVRGEGGKLLNCNGERFVDELLPRDIVSKKIYEEMKKTNSNNVFLDVSFMEKSFLQNRFPNIYNKCLEEGIDISKEPIPVAPAQHYFMGGIKVDLNGKTSMENLYAFGETSCTGVHGANRLASNSLLEALVFSRRGALEINSYIDNLELIIEERECEDLDKYRLLNRKILIDEICRLRGDIKDELVTCGGECKKSS.

Residues 12 to 15, Lys34, 41 to 48, and Asp204 each bind FAD; these read SGVA and NSSLAQGG. Residue Arg267 is the Proton donor/acceptor of the active site. Residues Glu352 and 368–369 each bind FAD; that span reads SL.

This sequence belongs to the FAD-dependent oxidoreductase 2 family. NadB subfamily. FAD is required as a cofactor.

It is found in the cytoplasm. The catalysed reaction is L-aspartate + O2 = iminosuccinate + H2O2. It participates in cofactor biosynthesis; NAD(+) biosynthesis; iminoaspartate from L-aspartate (oxidase route): step 1/1. In terms of biological role, catalyzes the oxidation of L-aspartate to iminoaspartate, the first step in the de novo biosynthesis of NAD(+). The chain is L-aspartate oxidase (nadB) from Clostridium perfringens (strain 13 / Type A).